The sequence spans 149 residues: Large ribosomal subunit protein uL15 (149 aa).

Basic residues-rich tracts occupy residues 1 to 14 (MPTR…HRGH) and 21 to 30 (RVGKHRKHPG). Positions 1–43 (MPTRFSKTRKHRGHVSAGKGRVGKHRKHPGGRGMAGGQHHHRT) are disordered.

It belongs to the universal ribosomal protein uL15 family. In terms of assembly, component of the large ribosomal subunit (LSU). Mature N.crassa ribosomes consist of a small (40S) and a large (60S) subunit. The 40S small subunit contains 1 molecule of ribosomal RNA (18S rRNA) and at least 32 different proteins. The large 60S subunit contains 3 rRNA molecules (26S, 5.8S and 5S rRNA) and at least 42 different proteins.

Its subcellular location is the cytoplasm. Its function is as follows. Component of the ribosome, a large ribonucleoprotein complex responsible for the synthesis of proteins in the cell. The small ribosomal subunit (SSU) binds messenger RNAs (mRNAs) and translates the encoded message by selecting cognate aminoacyl-transfer RNA (tRNA) molecules. The large subunit (LSU) contains the ribosomal catalytic site termed the peptidyl transferase center (PTC), which catalyzes the formation of peptide bonds, thereby polymerizing the amino acids delivered by tRNAs into a polypeptide chain. The nascent polypeptides leave the ribosome through a tunnel in the LSU and interact with protein factors that function in enzymatic processing, targeting, and the membrane insertion of nascent chains at the exit of the ribosomal tunnel. The sequence is that of Large ribosomal subunit protein uL15 (rpl-28) from Neurospora crassa (strain ATCC 24698 / 74-OR23-1A / CBS 708.71 / DSM 1257 / FGSC 987).